We begin with the raw amino-acid sequence, 66 residues long: FMRFamide-like neuropeptide 21 (66 aa).

The N-terminal stretch at 1-16 (MRLFILLSCLLAWVLA) is a signal peptide.

This sequence belongs to the FARP (FMRFamide related peptide) family. In terms of processing, may be processed by convertase egl-3. Expressed in the ADL, ASE and ASH sensory neurons, the URA motor neurons and the MC, M2 and M4 pharyngeal neurons.

Its subcellular location is the secreted. FMRFamide-like neuropeptide. Involved in modulating locomotion quiescence during the sleep-like state called lethargus which occurs during molting between larval and adult stages, acting via the G-protein coupled receptor npr-1. Plays a role in modulating social and feeding behavior. Its function is as follows. Ligand to G-protein coupled receptor npr-1. This is FMRFamide-like neuropeptide 21 from Caenorhabditis elegans.